We begin with the raw amino-acid sequence, 115 residues long: Large ribosomal subunit protein bL20 (115 aa).

The protein belongs to the bacterial ribosomal protein bL20 family.

Binds directly to 23S ribosomal RNA and is necessary for the in vitro assembly process of the 50S ribosomal subunit. It is not involved in the protein synthesizing functions of that subunit. The protein is Large ribosomal subunit protein bL20 of Chlorobium phaeovibrioides (strain DSM 265 / 1930) (Prosthecochloris vibrioformis (strain DSM 265)).